The sequence spans 734 residues: Methionine--tRNA ligase (734 aa).

The 'HIGH' region motif lies at 12-22 (PYVNNIPHLGN). 4 residues coordinate Zn(2+): Cys143, Cys146, Cys155, and Cys158. A 'KMSKS' region motif is present at residues 330-334 (KFSKS). Lys333 contributes to the ATP binding site. The region spanning 570–675 (FREKVLLRVV…QNPIAGERII (106 aa)) is the tRNA-binding domain.

Belongs to the class-I aminoacyl-tRNA synthetase family. MetG type 1 subfamily. Homodimer. It depends on Zn(2+) as a cofactor.

The protein resides in the cytoplasm. It carries out the reaction tRNA(Met) + L-methionine + ATP = L-methionyl-tRNA(Met) + AMP + diphosphate. In terms of biological role, is required not only for elongation of protein synthesis but also for the initiation of all mRNA translation through initiator tRNA(fMet) aminoacylation. This is Methionine--tRNA ligase from Borreliella burgdorferi (strain ZS7) (Borrelia burgdorferi).